The primary structure comprises 325 residues: Helicase VP6-A (325 aa).

2 disordered regions span residues 1–127 and 174–230; these read MLLA…NGRR and EGVA…EPAR. 4 stretches are compositionally biased toward basic and acidic residues: residues 8–18, 32–54, 61–79, and 92–105; these read VIKRSSEELKQ, EGGK…KDGE, GQKE…DRRI, and PGER…RGDG. Position 106 (Lys-106) interacts with ATP. Gly residues predominate over residues 106–122; it reads KVGGGGGDADAGVGATG. Residues 175-229 show a composition bias toward basic and acidic residues; it reads GVAEQTERSRDLRRKEKNGTHAKAVERGGRKQRKESHGDAQREGVEEEKTSEEPA.

The protein belongs to the orbivirus VP6 family. Homohexamer.

It localises to the virion. It catalyses the reaction ATP + H2O = ADP + phosphate + H(+). In terms of biological role, ATP dependent RNA helicase essential for RNA packaging and viral transcription. Possesses ss- and dsRNA-binding capacity. This is Helicase VP6-A (Segment-9) from Bluetongue virus 13 (isolate USA) (BTV 13).